Reading from the N-terminus, the 92-residue chain is Small ribosomal subunit protein uS17 (92 aa).

This sequence belongs to the universal ribosomal protein uS17 family. As to quaternary structure, part of the 30S ribosomal subunit.

In terms of biological role, one of the primary rRNA binding proteins, it binds specifically to the 5'-end of 16S ribosomal RNA. The polypeptide is Small ribosomal subunit protein uS17 (Mycoplasma mobile (strain ATCC 43663 / 163K / NCTC 11711) (Mesomycoplasma mobile)).